A 772-amino-acid polypeptide reads, in one-letter code: Annulin (772 aa).

2 S-palmitoyl cysteine lipidation sites follow: Cys4 and Cys5. Positions 15 to 57 are disordered; sequence NEGSGGGIPLMPVRGGSTRRPDSLPKPPAAVVPSPPSPGDVPD. Positions 38-53 are enriched in pro residues; that stretch reads LPKPPAAVVPSPPSPG. Active-site residues include His400 and Asp427. Ca(2+) is bound by residues Asn467, Asp469, Glu517, and Glu522.

It belongs to the transglutaminase superfamily. Transglutaminase family. Ca(2+) serves as cofactor. In terms of tissue distribution, has an annular, or ring-like expression pattern in epithelial annuli of developing limb segment boundary cells. In embryos, it is seen in gastrulating cells, in cells surrounding rapidly dividing neuroblasts, and in muscle pioneer cells invaginating to form apodemes.

The protein localises to the cell membrane. It carries out the reaction L-glutaminyl-[protein] + L-lysyl-[protein] = [protein]-L-lysyl-N(6)-5-L-glutamyl-[protein] + NH4(+). Participates in morphogenetic activities of the cells, maybe by stabilizing the membrane or subcortical structures of cells that are under mechanical stress. Probably catalyzes the cross-linking of proteins and the conjugation of polyamines to proteins. The protein is Annulin of Schistocerca americana (American grasshopper).